The chain runs to 162 residues: Transcription elongation factor GreA (162 aa).

Residues 50-75 adopt a coiled-coil conformation; sequence YHAAREEQGHLESRIRQLQELLRTAK.

Belongs to the GreA/GreB family.

Functionally, necessary for efficient RNA polymerase transcription elongation past template-encoded arresting sites. The arresting sites in DNA have the property of trapping a certain fraction of elongating RNA polymerases that pass through, resulting in locked ternary complexes. Cleavage of the nascent transcript by cleavage factors such as GreA or GreB allows the resumption of elongation from the new 3'terminus. GreA releases sequences of 2 to 3 nucleotides. The chain is Transcription elongation factor GreA from Saccharopolyspora erythraea (strain ATCC 11635 / DSM 40517 / JCM 4748 / NBRC 13426 / NCIMB 8594 / NRRL 2338).